Here is a 252-residue protein sequence, read N- to C-terminus: Imidazole glycerol phosphate synthase subunit HisF (252 aa).

Residues aspartate 11 and aspartate 130 contribute to the active site.

The protein belongs to the HisA/HisF family. Heterodimer of HisH and HisF.

The protein localises to the cytoplasm. It carries out the reaction 5-[(5-phospho-1-deoxy-D-ribulos-1-ylimino)methylamino]-1-(5-phospho-beta-D-ribosyl)imidazole-4-carboxamide + L-glutamine = D-erythro-1-(imidazol-4-yl)glycerol 3-phosphate + 5-amino-1-(5-phospho-beta-D-ribosyl)imidazole-4-carboxamide + L-glutamate + H(+). It participates in amino-acid biosynthesis; L-histidine biosynthesis; L-histidine from 5-phospho-alpha-D-ribose 1-diphosphate: step 5/9. IGPS catalyzes the conversion of PRFAR and glutamine to IGP, AICAR and glutamate. The HisF subunit catalyzes the cyclization activity that produces IGP and AICAR from PRFAR using the ammonia provided by the HisH subunit. In Hydrogenobaculum sp. (strain Y04AAS1), this protein is Imidazole glycerol phosphate synthase subunit HisF.